A 465-amino-acid chain; its full sequence is Box C/D snoRNA protein 1 (465 aa).

A disordered region spans residues 1–72 (MEFAAENEGK…GSRQRPEEIP (72 aa)). At Ser-25 the chain carries Phosphoserine. Over residues 56 to 70 (EIGDGEEGSRQRPEE) the composition is skewed to basic and acidic residues. Glycyl lysine isopeptide (Lys-Gly) (interchain with G-Cter in SUMO2) cross-links involve residues Lys-79, Lys-108, Lys-118, Lys-138, Lys-148, Lys-157, Lys-168, Lys-178, and Lys-195. Cys-215, Cys-218, Cys-227, Cys-230, Cys-235, Cys-239, His-243, and Cys-249 together coordinate Zn(2+). The segment at 215 to 249 (CETCGTEEAKYRCPRCMRYSCSLPCVKKHKAELTC) adopts an HIT-type zinc-finger fold. A Glycyl lysine isopeptide (Lys-Gly) (interchain with G-Cter in SUMO2) cross-link involves residue Lys-454.

This sequence belongs to the BCD1 family. As to quaternary structure, interacts with FBL, SNU13, NOP58, NUFIP1, RUVBL1, RUVBL2 and TAF9. Interacts (via HIT-type zinc finger) with the RUVBL1/RUVBL2 complex in the presence of ADP.

Its function is as follows. Required for box C/D snoRNAs accumulation involved in snoRNA processing, snoRNA transport to the nucleolus and ribosome biogenesis. This is Box C/D snoRNA protein 1 (ZNHIT6) from Pongo abelii (Sumatran orangutan).